Reading from the N-terminus, the 1581-residue chain is MKKIFGFRSKGPSPLGPSARPRSNCVGFGRESASGSHVPRYHIHDKDMGKIHKAASVGDVAKVQHILILGKSGVNDRDKKDRTALHLACAYGHPEVVTLLVERKCEIDARDSESSTALIKAVQCQEEECAAILLDHGADPNVMDSSGNTALHYAVYSENTSMAAKLLAHNANIEAKNKDDLTPMLLAVKENKQHIVEFLVKKKASIHAVDQLGSNRQMFEYDGKRLQRSENSNPVDNGSEDGSLTRSYNTPGPADSWPTSDEEDYNFDNKNVPKINLTELWTAAQQSRKNQTKCGFEELDNGARFDDSDSPSESEDAIEVEPAPSVRVQTLSPSRQSPDPVEGATELAIEGEENGTDVIESASQEQPNHDNLTRADGWHKSNKSEMMSALGLGEDEDEDSPWDSESISESVSLKDVGHFSGTADQTGKRRAHGQIEDVTYIPSCMSGSRNFKMAKLEESRNVGLPVAHMEAPRKYVIMEPTIERRAPVLNKTETVGMTDAQTFKSEPESVSREEQTRLSGSEDSQQKVEEKRKYKNNEAEPSGNLYSGAADGGADVKPQSGDTENQQSPREGSEGRGSGPALLMKEAKKMENEKWVSREPARTAMSERTGLPTGGWPQMQDGSCWSDTDQSEARPTKKTSSKHNKDSGQTAAVDNLDDFTESSETASEDHELQGPDSESILCAIEHLRLECKDTASLLKIRDAVYSYKRLIELKRSHCELLTGKLKRMENKYKGLQKEMSETEEVKSRLEHEKVGWEQELCRLRFALKQEEEKRRSADQLSEKTMEQLRRKGEQCQSEVEARQQLEASLRTLEMELKTVKSHLNQVLEERNETQRQLSREQNARMLQDGILASHLCKQKEIEMTQKKMTSEVSVSHEKEKDLLHKNQRLQDEVAVLRLEMDTIKSHNQEKEKRYLEDIKIANEKNDNLQRMVKLNMLSSKLDNEKQNKERLETDVESFRSRLASALHDHAEIQTAKRDLEIAFQRARDEWFRVKDKMNFDMSNLRDNNEVLSQQLSKTERKLNSLEIEFHHTKDELREKTLALKHAQRDLSQTQCQMKEVEHMFQDEQGKVSKFMGKQESIEERLAQLQSENTLLRQQLDDAANKAESKDKTIVNIQDQFQDVLTRFQAESQRHSLRLEDRNQELVSECSHLRERLCQYENEKAEREVVVRQLQQELADTLKKQSMSEASLEVSSRYRSNLEEEARDLKKKLGQLRSQLQEARDQHREAVHHAEKMEDHLQKLELEKSKFEITIKKQSEEIDQLQENLSRVNLSEEDKEKLQKLTELKESLECTVDQEQKRSSALEKELMRTIQKKCGKLEKNKKQLEQEVVNLRSHMEKNMVEHSQAQQYAREVEERARQDLVEKLKQVNLFLQAQAASQESLEQLRENSNASVRSQMELRIKDLESQLYRMKAQEDFDKIELEKYKQLYQEEFRARKSLSSKLNKTSEKLEEASSKLLLEEQQNRSLLSTLSTRPVVECPCVGSLHNSLVFNRTLIPRENIVVPTSGLQPSNKRVEIYLTKMHQELEKSINRELKEATAELESEFCRVSPLGSATKASQDQLSDASQEFIDILKKKYMI.

The interval 1–22 (MKKIFGFRSKGPSPLGPSARPR) is disordered. Ser-13 carries the post-translational modification Phosphoserine. ANK repeat units follow at residues 46-76 (KDMGKIHKAASVGDVAKVQHILILGKSGVND), 80-109 (KDRTALHLACAYGHPEVVTLLVERKCEIDA), 113-142 (ESSTALIKAVQCQEEECAAILLDHGADPNV), 146-175 (SGNTALHYAVYSENTSMAAKLLAHNANIEA), and 179-208 (DDLTPMLLAVKENKQHIVEFLVKKKASIHA). Disordered stretches follow at residues 225-270 (RLQR…FDNK), 299-343 (LDNG…PVEG), 361-381 (SASQEQPNHDNLTRADGWHKS), and 488-652 (VLNK…QTAA). Residues 229-250 (SENSNPVDNGSEDGSLTRSYNT) show a composition bias toward polar residues. 2 positions are modified to phosphoserine: Ser-239 and Ser-260. Residues 308–319 (SDSPSESEDAIE) show a composition bias toward acidic residues. Positions 327–337 (RVQTLSPSRQS) are enriched in polar residues. Residues 367-381 (PNHDNLTRADGWHKS) show a composition bias toward basic and acidic residues. The span at 491-504 (KTETVGMTDAQTFK) shows a compositional bias: polar residues. 3 stretches are compositionally biased toward basic and acidic residues: residues 505–516 (SEPESVSREEQT), 524–538 (SQQKVEEKRKYKNNE), and 585–601 (KEAKKMENEKWVSREPA). Ser-511 carries the phosphoserine modification. Coiled-coil stretches lie at residues 715-845 (RSHC…NARM), 876-1345 (HEKE…MVEH), 1396-1470 (RSQM…RSLL), and 1521-1550 (LTKMHQELEKSINRELKEATAELESEFCRV).

Interacts with TRIO. Interacts with GPS2. Interacts with CCDC85B. Interacts with HMMR. As to expression, widely expressed. Expressed in the arcuate and ventromedial nuclei within the hypothalamus and in the ependyma and the circumventricular organs (at protein level).

Its subcellular location is the cytoplasm. It is found in the cytosol. Its function is as follows. Acts as a regulator of adipogenesis. Involved in the regulation of the feeding behavior. The sequence is that of Ankyrin repeat domain-containing protein 26 (Ankrd26) from Mus musculus (Mouse).